We begin with the raw amino-acid sequence, 417 residues long: Type II methyltransferase M.Eco47II (417 aa).

In terms of domain architecture, SAM-dependent MTase C5-type spans 81–414 (YTVLELFAGA…KSVVHLLDKI (334 aa)). The active site involves Cys153.

This sequence belongs to the class I-like SAM-binding methyltransferase superfamily. C5-methyltransferase family.

The enzyme catalyses a 2'-deoxycytidine in DNA + S-adenosyl-L-methionine = a 5-methyl-2'-deoxycytidine in DNA + S-adenosyl-L-homocysteine + H(+). Functionally, a methylase that recognizes the double-stranded sequence 5'-GGNCC-3', methylates C-? on both strands, and protects the DNA from cleavage by both the Eco47I and Eco47II endonucleases. The sequence is that of Type II methyltransferase M.Eco47II from Escherichia coli.